The chain runs to 306 residues: Glutaminase (306 aa).

Residues Ser64, Asn115, Glu159, Asn166, Tyr190, Tyr242, and Val260 each coordinate substrate.

Belongs to the glutaminase family. As to quaternary structure, homotetramer.

It catalyses the reaction L-glutamine + H2O = L-glutamate + NH4(+). This chain is Glutaminase, found in Aeromonas salmonicida (strain A449).